Here is a 1185-residue protein sequence, read N- to C-terminus: Chromosome partition protein Smc (1185 aa).

32-39 lines the ATP pocket; the sequence is PNGSGKSN. Residues 167-494 are a coiled coil; the sequence is ISKYKSRKMD…KLNEKNSHLS (328 aa). Residues 521–639 form the SMC hinge domain; sequence TGIIGVVADQ…TDLKSAIEIA (119 aa). Positions 677-1031 form a coiled coil; sequence RSRKIEDLKK…KVIQEIEETM (355 aa).

Belongs to the SMC family. In terms of assembly, homodimer.

The protein resides in the cytoplasm. Required for chromosome condensation and partitioning. The sequence is that of Chromosome partition protein Smc from Halothermothrix orenii (strain H 168 / OCM 544 / DSM 9562).